The chain runs to 1444 residues: Adhesin P1 (1444 aa).

The N-terminal stretch at 1 to 30 (MHQPKKRLAKKSWAFLTAALTLGVITGVGG) is a signal peptide. 3 disordered regions span residues 231–283 (QSSF…EVER), 845–885 (IPFE…ALPN), and 927–949 (GDSN…TNEG). The span at 240–257 (LQKDSPVKDSSKQGEKLS) shows a compositional bias: basic and acidic residues. The span at 258–272 (ETTASSMSSGMATST) shows a compositional bias: low complexity. Polar residues-rich tracts occupy residues 851–860 (KPSNNSTPFD) and 868–878 (VTPSGGSSKPT). Basic and acidic residues predominate over residues 933–946 (FNKDSEQKWDKTET). The helical transmembrane segment at 1353-1373 (VLPLIVTVPIVVIILSVTLGL) threads the bilayer. A disordered region spans residues 1419–1444 (NAPKKLKQATPTKPTPKTPPKPPVKQ). Residues 1431–1444 (KPTPKTPPKPPVKQ) are compositionally biased toward pro residues.

It belongs to the adhesin P1 family.

It is found in the cell membrane. Its function is as follows. The protein is the major adhesin mediating the attachment of this mycoplasma to the ciliated epithelium. This chain is Adhesin P1 (mgpA), found in Mycoplasma genitalium (strain ATCC 33530 / DSM 19775 / NCTC 10195 / G37) (Mycoplasmoides genitalium).